A 130-amino-acid chain; its full sequence is Small ribosomal subunit protein uS11c (130 aa).

This sequence belongs to the universal ribosomal protein uS11 family. As to quaternary structure, part of the 30S ribosomal subunit.

The protein resides in the plastid. It is found in the chloroplast. This is Small ribosomal subunit protein uS11c from Guillardia theta (Cryptophyte).